The chain runs to 117 residues: Appetite-regulating hormone (117 aa).

Residues 1–23 form the signal peptide; sequence MPSPGTVCSLLLFSMLWADLAMA. Ser26 carries O-decanoyl serine; alternate lipidation. Residue Ser26 is the site of O-hexanoyl serine; alternate attachment. Residue Ser26 is the site of O-octanoyl serine; alternate attachment. Residues 29-52 form a disordered region; the sequence is SPEHQKVQQRKESKKPPAKLQPRA. The span at 31–43 shows a compositional bias: basic and acidic residues; it reads EHQKVQQRKESKK. A propeptide spans 52–75 (removed in mature form); sequence ALEGLIHPEDTSQVEGAEDELEIR. Leu98 bears the Leucine amide mark. Positions 99–117 are cleaved as a propeptide — removed in mature form; the sequence is GKFLQDVLWEEADEVLADE.

The protein belongs to the motilin family. Post-translationally, O-octanoylated by GOAT/MBOAT4. O-octanoylation or O-decanoylation is essential for ghrelin activity. The O-decanoylated forms Ghrelin-27-C10 and Ghrelin-28-C10 differ in the length of the carbon backbone of the carboxylic acid bound to Ser-26. A small fraction of ghrelin, ghrelin-27-C10:1, ghrelin-27-C10:2, ghrelin-28-C8:1, ghrelin-28-C10:1, and ghrelin-28-C10:2, may be modified with singly or doubly unsaturated carboxylic acids. In terms of processing, amidation of Leu-98 is essential for obestatin activity.

It localises to the secreted. Functionally, ghrelin is the ligand for growth hormone secretagogue receptor type 1 (GHSR). Induces the release of growth hormone from the pituitary. Has an appetite-stimulating effect, induces adiposity and stimulates gastric acid secretion. Involved in growth regulation. Its function is as follows. Obestatin may be the ligand for GPR39. May have an appetite-reducing effect resulting in decreased food intake. May reduce gastric emptying activity and jejunal motility. This chain is Appetite-regulating hormone (GHRL), found in Felis catus (Cat).